Reading from the N-terminus, the 340-residue chain is HTH-type transcriptional regulator PtxS (340 aa).

In terms of domain architecture, HTH lacI-type spans 12-67; that stretch reads VTISEVAQAAGVSKATVSRYIGGDRQLLADATAQRIEAVIEQLGYRPNRMASALKR. Positions 14–33 form a DNA-binding region, H-T-H motif; the sequence is ISEVAQAAGVSKATVSRYIG.

In terms of assembly, homodimer.

2-ketogluconate acts as a molecular effector and causes dissociation of PtxS from its target promoter. Glucose negatively affects the molecular binding of PtxS and 2KGA, and gluconic acid inhibits the PtxS-2KGA binding reaction. Functionally, involved in the regulation of 2-ketogluconic acid metabolism via the control of the expression of the kgu operon. Binds directly to a 14-bp palindrome sequence via its conserved HTH motif. This chain is HTH-type transcriptional regulator PtxS, found in Pseudomonas plecoglossicida.